Consider the following 318-residue polypeptide: Peptidyl-prolyl cis-trans isomerase CPR4 (318 aa).

An N-terminal signal peptide occupies residues 1 to 20 (MWLKSLLLCLYSLVLCQVHA). The PPIase cyclophilin-type domain maps to 55–225 (YFDPVSKSMK…HELRFLYFVL (171 aa)). The N-linked (GlcNAc...) asparagine glycan is linked to Asn166. Residues 286–303 (ISRALMCLTVLGLCFIAY) form a helical membrane-spanning segment.

It localises to the membrane. The catalysed reaction is [protein]-peptidylproline (omega=180) = [protein]-peptidylproline (omega=0). In terms of biological role, PPIases accelerate the folding of proteins. It catalyzes the cis-trans isomerization of proline imidic peptide bonds in oligopeptides. The sequence is that of Peptidyl-prolyl cis-trans isomerase CPR4 (CPR4) from Saccharomyces cerevisiae (strain ATCC 204508 / S288c) (Baker's yeast).